The following is a 325-amino-acid chain: Glutarate 2-hydroxylase (325 aa).

3 residues coordinate Fe cation: His-160, Asp-162, and His-292.

The protein belongs to the glutarate hydroxylase family. As to quaternary structure, homotetramer. The cofactor is Fe(2+).

It carries out the reaction glutarate + 2-oxoglutarate + O2 = (S)-2-hydroxyglutarate + succinate + CO2. The protein operates within amino-acid degradation. In terms of biological role, acts as an alpha-ketoglutarate-dependent dioxygenase catalyzing hydroxylation of glutarate (GA) to L-2-hydroxyglutarate (L2HG). Functions in a L-lysine degradation pathway that proceeds via cadaverine, glutarate and L-2-hydroxyglutarate. This Escherichia coli O127:H6 (strain E2348/69 / EPEC) protein is Glutarate 2-hydroxylase.